The primary structure comprises 134 residues: Interleukin-5 (134 aa).

The signal sequence occupies residues 1–19; the sequence is MRMLLHLSLLALGAAYVYA. O-linked (GalNAc...) threonine glycosylation is present at T22. N47 carries an N-linked (GlcNAc...) asparagine glycan.

Belongs to the IL-5 family. As to quaternary structure, homodimer; disulfide-linked. Interacts with IL5RA. Interacts with CSF2RB. As to expression, present in peripheral blood mononuclear cells.

The protein localises to the secreted. Functionally, homodimeric cytokine expressed predominantly by T-lymphocytes and NK cells that plays an important role in the survival, differentiation, and chemotaxis of eosinophils. Also acts on activated and resting B-cells to induce immunoglobulin production, growth, and differentiation. Mechanistically, exerts its biological effects through a receptor composed of IL5RA subunit and the cytokine receptor common subunit beta/CSF2RB. Binding to the receptor leads to activation of various kinases including LYN, SYK and JAK2 and thereby propagates signals through the RAS-MAPK and JAK-STAT5 pathways respectively. The polypeptide is Interleukin-5 (IL5) (Homo sapiens (Human)).